The following is a 94-amino-acid chain: Co-chaperonin GroES (94 aa).

It belongs to the GroES chaperonin family. As to quaternary structure, heptamer of 7 subunits arranged in a ring. Interacts with the chaperonin GroEL.

The protein localises to the cytoplasm. Functionally, together with the chaperonin GroEL, plays an essential role in assisting protein folding. The GroEL-GroES system forms a nano-cage that allows encapsulation of the non-native substrate proteins and provides a physical environment optimized to promote and accelerate protein folding. GroES binds to the apical surface of the GroEL ring, thereby capping the opening of the GroEL channel. The sequence is that of Co-chaperonin GroES from Bacillus mycoides (strain KBAB4) (Bacillus weihenstephanensis).